Here is a 445-residue protein sequence, read N- to C-terminus: T-box transcription factor TBX20 (445 aa).

The T-box DNA-binding region spans 108-287 (LWDKFHELGT…SNPFAKGFRD (180 aa)). The interval 318-337 (EEDVLGEESQTTQSRGSAFT) is disordered. Residues 325-337 (ESQTTQSRGSAFT) are compositionally biased toward polar residues.

Prominently expressed in the extraembryonic mesoderm, developing heart, eye analage and motor neurons of hindbrain and spinal cord. Expressed in extraembryonic tissues such as the amnion and allantois.

It localises to the nucleus. Acts as a transcriptional activator and repressor required for cardiac development and may have key roles in the maintenance of functional and structural phenotypes in adult heart. The chain is T-box transcription factor TBX20 (Tbx20) from Mus musculus (Mouse).